Consider the following 132-residue polypeptide: D-ribose pyranase (132 aa).

His20 (proton donor) is an active-site residue. Substrate contacts are provided by residues Asp28, His99, and 121-123 (YSN).

Belongs to the RbsD / FucU family. RbsD subfamily. Homodecamer.

Its subcellular location is the cytoplasm. The catalysed reaction is beta-D-ribopyranose = beta-D-ribofuranose. The protein operates within carbohydrate metabolism; D-ribose degradation; D-ribose 5-phosphate from beta-D-ribopyranose: step 1/2. In terms of biological role, catalyzes the interconversion of beta-pyran and beta-furan forms of D-ribose. The protein is D-ribose pyranase of Pseudomonas putida (strain ATCC 47054 / DSM 6125 / CFBP 8728 / NCIMB 11950 / KT2440).